We begin with the raw amino-acid sequence, 787 residues long: Signal transducer and activator of transcription 5B (787 aa).

The residue at position 90 (Tyr-90) is a Phosphotyrosine. 2 positions are modified to phosphoserine: Ser-128 and Ser-193. The required for interaction with NMI stretch occupies residues 232–321 (KHQKTLQLLR…MLAEVNATIT (90 aa)). The SH2 domain occupies 589 to 686 (WNDGAILGFV…EVYSKYYTPV (98 aa)). Tyr-682 carries the phosphotyrosine modification. Tyr-699 carries the phosphotyrosine; by HCK, JAK and PTK6 modification.

It belongs to the transcription factor STAT family. In terms of assembly, upon activation, forms homodimers. Forms also heterodimers with related family members. Binds NR3C1. Interacts with NCOA1. Interacts with NMI. Interacts with SOCS7. Interacts (via SH2 domain) with INSR. Interacts with CPEB3; this inhibits STAT5B-mediated transcriptional activation. In terms of processing, tyrosine phosphorylated in response to signaling via activated KIT, resulting in translocation to the nucleus. Tyrosine phosphorylated in response to signaling via activated FLT3; wild-type FLT3 results in much weaker phosphorylation than constitutively activated mutant FLT3. Alternatively, can be phosphorylated by JAK2. Phosphorylation at Tyr-699 by PTK6 or HCK leads to an increase of its transcriptional activity.

The protein resides in the cytoplasm. It is found in the nucleus. Functionally, carries out a dual function: signal transduction and activation of transcription. Mediates cellular responses to the cytokine KITLG/SCF and other growth factors. Binds to the GAS element and activates PRL-induced transcription. Positively regulates hematopoietic/erythroid differentiation. The protein is Signal transducer and activator of transcription 5B (STAT5B) of Homo sapiens (Human).